A 1158-amino-acid chain; its full sequence is ATP-dependent helicase/deoxyribonuclease subunit B (1158 aa).

8 to 15 (GRAGTGKS) is a binding site for ATP. Residues Cys791, Cys1112, Cys1115, and Cys1121 each contribute to the [4Fe-4S] cluster site.

The protein belongs to the helicase family. AddB/RexB type 1 subfamily. Heterodimer of AddA and AddB. Mg(2+) is required as a cofactor. Requires [4Fe-4S] cluster as cofactor.

The heterodimer acts as both an ATP-dependent DNA helicase and an ATP-dependent, dual-direction single-stranded exonuclease. Recognizes the chi site generating a DNA molecule suitable for the initiation of homologous recombination. The AddB subunit has 5' -&gt; 3' nuclease activity but not helicase activity. The polypeptide is ATP-dependent helicase/deoxyribonuclease subunit B (Clostridium perfringens (strain 13 / Type A)).